Consider the following 771-residue polypeptide: MQVIKKVEELMGDAKWLVFQEEYNNKLNGKYETLFTLTNGYMGIRGTFEEGSEGERPGSFIAGIFNRGEAQVRELVNVQNWMRLKIYIEGEEIRLDRCELLEFQRILDMKKGVLFRKTVVKDDKGRVTKIEGYRFVSRSNRHRSAIRFFITPLNYEGVIGVENLIEGTVLNSATHPKYRVKHLKVVKNESICKSGIYLETATTDENKRIAVGSTLRIYNLEDINRENIAFFRRFIPLGENSAEYLEFKGEREKTVVVDKFAVTYTSRDVEKDLLKNAVENDLFDFVSRGFDEELEKHIAEYDKLWSVADITIEGDEEADIALRFNIFHLMSSVNEKDPWVSIGAKGLHGEGYKGHVFWDTEIFMLPFFIYVYPEAARTLLMYRYNMLDAARRNAALNGYKGAQYPWESADTGMEETPKWGFDYKGNPVRIWTGDLEHHITADVAFAVWEYFRATNDIDFMLNFGAEIILETARFWASRCEYVEELDRYEINNVIGPDEFHEHVNNNAYTNYFAKWNIKKGLEIIGELKENYPDYYYAITHKISLTPEEVEKWKEVEKKIYIPYDKDKKLIEQFEGYFEKKDYVIEKFDENNMPVWPEGVDVTKLGDTQLIKQADVVMLMLLMPEEFDEETKRINYEYYEKRTMHKSSLSPSMYAIMGLKVGDHRNAYQSFIRSAKVDLADNQGNAVEGIHAASCGGTWQVAVFGFGGLEIDREGVLNINPWLPEKWEKLSYKIFWKGSLLEVTVAKEEVSVKKLKGRETVKIKVKGKEMAL.

Substrate is bound at residue 358–359; that stretch reads WD. Glutamate 498 (proton donor) is an active-site residue. Residue 611–612 coordinates substrate; that stretch reads KQ.

The protein belongs to the glycosyl hydrolase 65 family.

The catalysed reaction is kojibiose + phosphate = beta-D-glucose 1-phosphate + D-glucose. In terms of biological role, catalyzes the reversible phosphorolysis of kojibiose into beta-D-glucose 1-phosphate (Glc1P) and D-glucose. The sequence is that of Kojibiose phosphorylase (kojP) from Caldanaerobacter subterraneus subsp. tengcongensis (strain DSM 15242 / JCM 11007 / NBRC 100824 / MB4) (Thermoanaerobacter tengcongensis).